A 395-amino-acid chain; its full sequence is uncharacterized protein (395 aa).

8 consecutive transmembrane segments (helical) span residues 15 to 35, 56 to 76, 86 to 106, 131 to 151, 175 to 195, 254 to 274, 298 to 318, and 348 to 368; these read ILAF…VTVF, WPWI…NIII, FHAP…FQIV, AVLL…LITW, WFSF…IFIA, LANI…FAIV, IAIT…TQFV, and VYIP…QVVI.

The protein resides in the cell membrane. This is an uncharacterized protein from Mycoplasma pneumoniae (strain ATCC 29342 / M129 / Subtype 1) (Mycoplasmoides pneumoniae).